The following is a 168-amino-acid chain: MPRSRINGNFIDKTFSIVANILLRIIPTTSGEKEAFTYYRDGMSAQSDGNYAEALQNYYEATRLEIDPYDRSYILYNIGLIHTSNGEHTKALEYYFRALERNPFLPQAFNNMAVICHYRGEQAIRQGDSEIAEAWSDQAAEYWKQAIALTPGNYIEAHNWLKITRRFE.

TPR repeat units lie at residues 35-68 (AFTYYRDGMSAQSDGNYAEALQNYYEATRLEIDP), 72-105 (SYILYNIGLIHTSNGEHTKALEYYFRALERNPFL), and 120-153 (GEQAIRQGDSEIAEAWSDQAAEYWKQAIALTPGN).

It belongs to the Ycf3 family.

It is found in the plastid. The protein localises to the chloroplast thylakoid membrane. Functionally, essential for the assembly of the photosystem I (PSI) complex. May act as a chaperone-like factor to guide the assembly of the PSI subunits. The polypeptide is Photosystem I assembly protein Ycf3 (Chloranthus spicatus (Chulantree)).